The sequence spans 341 residues: GTPase Obg (341 aa).

The region spanning 1-159 (MKFVDEALIK…RNLRLELRVL (159 aa)) is the Obg domain. The segment at 128–150 (TRYKSSVNRSPRQTTPGSPGESR) is disordered. Residues 129–144 (RYKSSVNRSPRQTTPG) show a composition bias toward polar residues. In terms of domain architecture, OBG-type G spans 160 to 334 (ADVGLLGLPN…LCYALMQLID (175 aa)). GTP is bound by residues 166 to 173 (GLPNAGKS), 191 to 195 (FTTLH), 213 to 216 (DIPG), 283 to 286 (NKID), and 315 to 317 (SAI). Positions 173 and 193 each coordinate Mg(2+).

This sequence belongs to the TRAFAC class OBG-HflX-like GTPase superfamily. OBG GTPase family. As to quaternary structure, monomer. Requires Mg(2+) as cofactor.

The protein resides in the cytoplasm. An essential GTPase which binds GTP, GDP and possibly (p)ppGpp with moderate affinity, with high nucleotide exchange rates and a fairly low GTP hydrolysis rate. Plays a role in control of the cell cycle, stress response, ribosome biogenesis and in those bacteria that undergo differentiation, in morphogenesis control. In Legionella pneumophila subsp. pneumophila (strain Philadelphia 1 / ATCC 33152 / DSM 7513), this protein is GTPase Obg.